The following is a 320-amino-acid chain: Putative HTH-type transcriptional regulatory protein VNG_2112C (320 aa).

In terms of domain architecture, HTH cro/C1-type spans 132–189; the sequence is LADRREDERLSLGQLASELGVSRRTVSKYEDGMNASIEVAMRLEDLFGGELTAPVDVM. Positions 143 to 162 form a DNA-binding region, H-T-H motif; sequence LGQLASELGVSRRTVSKYED.

The protein is Putative HTH-type transcriptional regulatory protein VNG_2112C of Halobacterium salinarum (strain ATCC 700922 / JCM 11081 / NRC-1) (Halobacterium halobium).